A 298-amino-acid polypeptide reads, in one-letter code: Protoheme IX farnesyltransferase (298 aa).

A run of 8 helical transmembrane segments spans residues 16–36, 45–65, 97–117, 141–161, 172–192, 223–243, 244–264, and 277–297; these read VVAL…PGMP, ALGF…NQLL, VLIV…TAVL, IVIG…AVTG, SLLV…LAIF, VLLA…VFYL, GGAV…LDPP, and VVYL…LPWV.

The protein belongs to the UbiA prenyltransferase family. Protoheme IX farnesyltransferase subfamily.

It localises to the cell inner membrane. The enzyme catalyses heme b + (2E,6E)-farnesyl diphosphate + H2O = Fe(II)-heme o + diphosphate. It functions in the pathway porphyrin-containing compound metabolism; heme O biosynthesis; heme O from protoheme: step 1/1. Functionally, converts heme B (protoheme IX) to heme O by substitution of the vinyl group on carbon 2 of heme B porphyrin ring with a hydroxyethyl farnesyl side group. This is Protoheme IX farnesyltransferase from Xanthomonas campestris pv. campestris (strain 8004).